The sequence spans 305 residues: uncharacterized protein (305 aa).

This is an uncharacterized protein from Methanocaldococcus jannaschii (strain ATCC 43067 / DSM 2661 / JAL-1 / JCM 10045 / NBRC 100440) (Methanococcus jannaschii).